Consider the following 252-residue polypeptide: Chitooligosaccharide deacetylase (252 aa).

Positions 61 and 125 each coordinate Mg(2+).

This sequence belongs to the YdjC deacetylase family. ChbG subfamily. In terms of assembly, homodimer. The cofactor is Mg(2+).

The protein localises to the cytoplasm. It catalyses the reaction N,N'-diacetylchitobiose + H2O = N-acetyl-beta-D-glucosaminyl-(1-&gt;4)-D-glucosamine + acetate. The catalysed reaction is diacetylchitobiose-6'-phosphate + H2O = N'-monoacetylchitobiose-6'-phosphate + acetate. The protein operates within glycan degradation; chitin degradation. Its function is as follows. Involved in the degradation of chitin. ChbG is essential for growth on the acetylated chitooligosaccharides chitobiose and chitotriose but is dispensable for growth on cellobiose and chitosan dimer, the deacetylated form of chitobiose. Deacetylation of chitobiose-6-P and chitotriose-6-P is necessary for both the activation of the chb promoter by the regulatory protein ChbR and the hydrolysis of phosphorylated beta-glucosides by the phospho-beta-glucosidase ChbF. Catalyzes the removal of only one acetyl group from chitobiose-6-P to yield monoacetylchitobiose-6-P, the inducer of ChbR and the substrate of ChbF. This is Chitooligosaccharide deacetylase from Salmonella enteritidis PT4 (strain P125109).